The primary structure comprises 309 residues: Small ribosomal subunit biogenesis GTPase RsgA (309 aa).

The region spanning 88 to 247 (KNLITRPPVA…IADTPGFNKP (160 aa)) is the CP-type G domain. Residues 137–140 (TKRD) and 189–197 (GPSGVGKSS) contribute to the GTP site. Residues Cys272, Cys277, His279, and Cys285 each contribute to the Zn(2+) site.

The protein belongs to the TRAFAC class YlqF/YawG GTPase family. RsgA subfamily. Monomer. Associates with 30S ribosomal subunit, binds 16S rRNA. It depends on Zn(2+) as a cofactor.

It is found in the cytoplasm. Functionally, one of several proteins that assist in the late maturation steps of the functional core of the 30S ribosomal subunit. Helps release RbfA from mature subunits. May play a role in the assembly of ribosomal proteins into the subunit. Circularly permuted GTPase that catalyzes slow GTP hydrolysis, GTPase activity is stimulated by the 30S ribosomal subunit. The chain is Small ribosomal subunit biogenesis GTPase RsgA from Prochlorococcus marinus (strain SARG / CCMP1375 / SS120).